The following is a 389-amino-acid chain: Large envelope protein (389 aa).

Position 1 is an N-acetylmethionine (Met1). Residue Gly2 is the site of N-myristoyl glycine; by host attachment. The pre-S1 stretch occupies residues 2-108 (GQNLSTSNPL…PPLRDTHPQA (107 aa)). Residues 2–163 (GQNLSTSNPL…FSRTGDPAPN (162 aa)) form a pre-S region. At 2–170 (GQNLSTSNPL…APNMESITSG (169 aa)) the chain is on the virion surface; in external conformation side. At 2-242 (GQNLSTSNPL…PGYRWMCLRR (241 aa)) the chain is on the intravirion; in internal conformation side. A disordered region spans residues 73-99 (IITTVPANPPPASTNRQSGRKPTPISP). The segment at 109–163 (MHWNSTTFHQALQDPRVRGLYFPAGGSSSGTAYPVPDTASHISSIFSRTGDPAPN) is pre-S2. The chain crosses the membrane as a helical span at residues 171–191 (FLGPLLVLQAGFFLLTKILTI). The Intravirion; in external conformation segment spans residues 192–242 (PQSLDSWWTSLNFLGGAPVCLGQNSQSPTSNHSPTSCPPICPGYRWMCLRR). The chain crosses the membrane as a helical span at residues 243-263 (FIIFLFILLLCLIFLLVLLDY). At 264 to 337 (QGMLPVCPLI…WASVRFSWLS (74 aa)) the chain is on the virion surface side. A glycan (N-linked (GlcNAc...) asparagine; by host) is linked at Asn309. The chain crosses the membrane as a helical span at residues 338 to 358 (LLAPFVQWFAGLSPTVWLSVI). Residues 359–364 (WMMWYW) lie on the Intravirion side of the membrane. The chain crosses the membrane as a helical span at residues 365–387 (GPNLYNILSPFIPLLPIFFCLWV). At 388–389 (YI) the chain is on the virion surface side.

This sequence belongs to the orthohepadnavirus major surface antigen family. In its internal form (Li-HBsAg), interacts with the capsid protein and with the isoform S. Interacts with host chaperone CANX. In terms of assembly, associates with host chaperone CANX through its pre-S2 N glycan; this association may be essential for isoform M proper secretion. As to quaternary structure, interacts with isoform L. Interacts with the antigens of satellite virus HDV (HDVAgs); this interaction is required for encapsidation of HDV genomic RNA. Isoform M is N-terminally acetylated by host at a ratio of 90%, and N-glycosylated by host at the pre-S2 region. Post-translationally, myristoylated.

It is found in the virion membrane. Its function is as follows. The large envelope protein exists in two topological conformations, one which is termed 'external' or Le-HBsAg and the other 'internal' or Li-HBsAg. In its external conformation the protein attaches the virus to cell receptors and thereby initiating infection. This interaction determines the species specificity and liver tropism. This attachment induces virion internalization predominantly through caveolin-mediated endocytosis. The large envelope protein also assures fusion between virion membrane and endosomal membrane. In its internal conformation the protein plays a role in virion morphogenesis and mediates the contact with the nucleocapsid like a matrix protein. The middle envelope protein plays an important role in the budding of the virion. It is involved in the induction of budding in a nucleocapsid independent way. In this process the majority of envelope proteins bud to form subviral lipoprotein particles of 22 nm of diameter that do not contain a nucleocapsid. The polypeptide is Large envelope protein (Gorilla gorilla (western gorilla)).